Consider the following 1390-residue polypeptide: DNA-directed RNA polymerase subunit beta (1390 aa).

Belongs to the RNA polymerase beta chain family. The RNAP catalytic core consists of 2 alpha, 1 beta, 1 beta' and 1 omega subunit. When a sigma factor is associated with the core the holoenzyme is formed, which can initiate transcription.

It catalyses the reaction RNA(n) + a ribonucleoside 5'-triphosphate = RNA(n+1) + diphosphate. DNA-dependent RNA polymerase catalyzes the transcription of DNA into RNA using the four ribonucleoside triphosphates as substrates. The protein is DNA-directed RNA polymerase subunit beta of Methylobacillus flagellatus (strain ATCC 51484 / DSM 6875 / VKM B-1610 / KT).